Consider the following 836-residue polypeptide: Zinc fingers and homeoboxes protein 2 (836 aa).

The interval 1–61 (MASKRKSTTP…EHSSKETEVV (61 aa)) is disordered. Positions 8-19 (TTPCMVRTSQVL) are enriched in polar residues. Positions 27–77 (ADRAKDKGAGMPQSDVTKDSWAAEPEHSSKETEVVEVKSMGENLSKKLQGG) are interaction with EFNB1. A compositionally biased stretch (basic and acidic residues) spans 50–61 (EPEHSSKETEVV). Residue lysine 64 forms a Glycyl lysine isopeptide (Lys-Gly) (interchain with G-Cter in SUMO2) linkage. C2H2-type zinc fingers lie at residues 78-101 (YECK…DMQH) and 110-133 (YVCA…SKFH). The segment at 164 to 214 (PITASGPGSSDNDPGVSVGKTPMTKTGKLKADAKKVPKKPDEAAPENHMEG) is disordered. A compositionally biased stretch (basic and acidic residues) spans 192–214 (LKADAKKVPKKPDEAAPENHMEG). Residues 195 to 358 (DAKKVPKKPD…PAQLTPTKVS (164 aa)) form a required for homodimerization region. 4 consecutive DNA-binding regions (homeobox) follow at residues 263 to 324 (NTTK…WSPE), 439 to 501 (TPAS…IVHI), 530 to 591 (PQKF…EQAV), and 628 to 690 (SPSS…TLSW). The interval 263–446 (NTTKYNSALD…PLTPASDRKK (184 aa)) is required for repressor activity. The required for interaction with NFYA stretch occupies residues 263–497 (NTTKYNSALD…SDHRYRCQRG (235 aa)). Positions 317–446 (HGISWSPEEV…PLTPASDRKK (130 aa)) are required for nuclear localization. The disordered stretch occupies residues 404–442 (GQKRPLVTPQAAPEPKRPHIAQVPEPPPKVANTPLTPAS). Lysine 455 is covalently cross-linked (Glycyl lysine isopeptide (Lys-Gly) (interchain with G-Cter in SUMO2)). Composition is skewed to basic and acidic residues over residues 699–709 (MSDDRGRDAVS), 730–746 (YAKD…EKLV), and 813–824 (RVAEGTVERADS). Residues 699–836 (MSDDRGRDAV…DSTPAEAGQA (138 aa)) are disordered. Residues serine 824 and serine 826 each carry the phosphoserine modification.

It belongs to the ZHX family. Homodimer (via homeobox domain 1). Heterodimer with ZHX1 (via homeobox domain 1). Heterodimer with ZHX3 (via homeobox domain 1). Heterodimerization with ZHX1 is not necessary for repressor activity. Interacts (via homeobox domain) with NFYA (via N-terminus). Interacts with EFNB1 intracellular domain peptide; the interaction enhances ZHX2 transcriptional repression activity. Expressed in retina where it localizes to Muller glial cells of the inner nuclear layer (at protein level). Detected in heart, brain, spleen, lung, liver, skeletal muscle, kidney and testis.

It is found in the nucleus. Its function is as follows. Acts as a transcriptional repressor. Represses the promoter activity of the CDC25C gene stimulated by NFYA. May play a role in retinal development where it regulates the composition of bipolar cell populations, by promoting differentiation of bipolar OFF-type cells. In the brain, may promote maintenance and suppress differentiation of neural progenitor cells in the developing cortex. The sequence is that of Zinc fingers and homeoboxes protein 2 (Zhx2) from Mus musculus (Mouse).